A 760-amino-acid chain; its full sequence is RxLR effector protein PSR2 (760 aa).

The first 21 residues, 1 to 21 (MGCRYAVLALAVAYFAGSIAA), serve as a signal peptide directing secretion. Positions 47-62 (RFLRAANTADERNEDR) match the RxLR-dEER motif. One copy of the WY1 repeat lies at 87–134 (PLLSWFEKKKSPDYVFLKLKINKGKQQLFDHPDWNVWVQYTTSVVKSD). Residues 87-760 (PLLSWFEKKK…TTKYMERYGQ (674 aa)) form a 7 X 93 AA tandem repeats region. The stretch at 135–221 (PEEAMIAALR…MKLYNSKPVN (87 aa)) is one LWY2 repeat. An LWY3 repeat occupies 222–312 (KKQQVTLVSM…KYVDNYNRDF (91 aa)). An LWY4 repeat occupies 313–403 (PDEATTVMAT…KYVEDLNLKP (91 aa)). An LWY5 repeat occupies 404 to 496 (EHNDLQVSII…KFLEHYYKSF (93 aa)). One copy of the LWY6 repeat lies at 497 to 584 (PTPMMSALAK…RYLDEFNKKF (88 aa)). The stretch at 585–760 (PDEKVSMTDT…TTKYMERYGQ (176 aa)) is one LWY7 repeat.

This sequence belongs to the RxLR effector family. In terms of assembly, interacts with host dsRNA-binding protein DRB4.

The protein localises to the secreted. It localises to the host cell. Its function is as follows. Secreted effector that possesses RNA silencing suppression activity by inhibiting the biogenesis of small RNAs in the host plant to promote enhanced susceptibility of host to the pathogen during infection. Interferes with secondary siRNA production by associating with host dsRNA-binding protein DRB4. Inhibits the host salicylic acid pathway during infection. The polypeptide is RxLR effector protein PSR2 (Phytophthora infestans (strain T30-4) (Potato late blight agent)).